The chain runs to 247 residues: ATP synthase subunit a, chloroplastic (247 aa).

5 helical membrane passes run 38-58, 95-115, 134-154, 199-219, and 220-240; these read QVLI…IIAV, VPFI…GALL, INTT…AGLT, LVVV…VMFL, and GLFT…AYIG.

It belongs to the ATPase A chain family. As to quaternary structure, F-type ATPases have 2 components, CF(1) - the catalytic core - and CF(0) - the membrane proton channel. CF(1) has five subunits: alpha(3), beta(3), gamma(1), delta(1), epsilon(1). CF(0) has four main subunits: a, b, b' and c.

Its subcellular location is the plastid. It localises to the chloroplast thylakoid membrane. Key component of the proton channel; it plays a direct role in the translocation of protons across the membrane. In Ranunculus macranthus (Large buttercup), this protein is ATP synthase subunit a, chloroplastic.